Reading from the N-terminus, the 451-residue chain is UDP-N-acetylmuramoylalanine--D-glutamate ligase (451 aa).

G118–T124 is a binding site for ATP.

Belongs to the MurCDEF family.

The protein resides in the cytoplasm. The enzyme catalyses UDP-N-acetyl-alpha-D-muramoyl-L-alanine + D-glutamate + ATP = UDP-N-acetyl-alpha-D-muramoyl-L-alanyl-D-glutamate + ADP + phosphate + H(+). It functions in the pathway cell wall biogenesis; peptidoglycan biosynthesis. In terms of biological role, cell wall formation. Catalyzes the addition of glutamate to the nucleotide precursor UDP-N-acetylmuramoyl-L-alanine (UMA). This Borreliella burgdorferi (strain ZS7) (Borrelia burgdorferi) protein is UDP-N-acetylmuramoylalanine--D-glutamate ligase.